The primary structure comprises 147 residues: uncharacterized protein (147 aa).

The signal sequence occupies residues 1–21; it reads MRTIFVGVLLLAIMGEGRLCA.

This is an uncharacterized protein from Treponema pallidum (strain Nichols).